Consider the following 288-residue polypeptide: MYYVNVILYLLEVLKPKIILGNLLSLYGGYGVAARGHIYSKLLFLDSLSLFLIVGSACVLNNVIDCDIDKIMLRTQCRLLVKYNKFCKLAILIAMFMLFLGLILCVKFINVVCFCLFLLGWLTYIFLYSFFLKKTSAISTIVGSISGSLPPIVGYCSVTNNFDFCSLNLLIMFALWQIPHSYAICILHFRDYKIANIPVFPVIYGFKITRYHIILHIILFFISVIVLTFINSINYKFLIISFFLCLTWLYYSLLELTIKNSKLWAKNIFRWSIIVIFLLNIIMLFGFV.

The next 9 membrane-spanning stretches (helical) occupy residues 6 to 26 (VILY…LLSL), 44 to 64 (FLDS…NNVI), 89 to 109 (LAIL…VKFI), 111 to 131 (VVCF…YSFF), 138 to 158 (ISTI…YCSV), 169 to 189 (LLIM…ILHF), 213 to 233 (IILH…INSI), 238 to 258 (LIIS…ELTI), and 268 to 288 (IFRW…FGFV).

The protein belongs to the UbiA prenyltransferase family. Protoheme IX farnesyltransferase subfamily.

The protein localises to the cell membrane. It catalyses the reaction heme b + (2E,6E)-farnesyl diphosphate + H2O = Fe(II)-heme o + diphosphate. It functions in the pathway porphyrin-containing compound metabolism; heme O biosynthesis; heme O from protoheme: step 1/1. Its function is as follows. Converts heme B (protoheme IX) to heme O by substitution of the vinyl group on carbon 2 of heme B porphyrin ring with a hydroxyethyl farnesyl side group. This Buchnera aphidicola subsp. Baizongia pistaciae (strain Bp) protein is Protoheme IX farnesyltransferase.